Here is a 359-residue protein sequence, read N- to C-terminus: Phospho-N-acetylmuramoyl-pentapeptide-transferase (359 aa).

10 consecutive transmembrane segments (helical) span residues 3-23 (QILI…PVLI), 55-75 (VAIL…GLAL), 84-104 (GLLV…DDLI), 120-140 (TVGI…FGNA), 156-176 (IATV…LVSA), 187-207 (LDGL…LITF), 231-251 (LALV…WNAA), 255-275 (IFMG…LSVT), 280-300 (ILAV…VVQI), and 334-354 (FWLL…GEWL).

The protein belongs to the glycosyltransferase 4 family. MraY subfamily. It depends on Mg(2+) as a cofactor.

The protein resides in the cell membrane. It catalyses the reaction UDP-N-acetyl-alpha-D-muramoyl-L-alanyl-gamma-D-glutamyl-meso-2,6-diaminopimeloyl-D-alanyl-D-alanine + di-trans,octa-cis-undecaprenyl phosphate = di-trans,octa-cis-undecaprenyl diphospho-N-acetyl-alpha-D-muramoyl-L-alanyl-D-glutamyl-meso-2,6-diaminopimeloyl-D-alanyl-D-alanine + UMP. It functions in the pathway cell wall biogenesis; peptidoglycan biosynthesis. In terms of biological role, catalyzes the initial step of the lipid cycle reactions in the biosynthesis of the cell wall peptidoglycan: transfers peptidoglycan precursor phospho-MurNAc-pentapeptide from UDP-MurNAc-pentapeptide onto the lipid carrier undecaprenyl phosphate, yielding undecaprenyl-pyrophosphoryl-MurNAc-pentapeptide, known as lipid I. The protein is Phospho-N-acetylmuramoyl-pentapeptide-transferase of Mycobacterium sp. (strain MCS).